The following is a 104-amino-acid chain: PLAT domain-containing protein 3 (104 aa).

The PLAT domain maps to 1 to 104; it reads MSLRLYDSYG…LARDASPYEL (104 aa).

The sequence is that of PLAT domain-containing protein 3 from Arabidopsis thaliana (Mouse-ear cress).